The following is a 452-amino-acid chain: Probable splicing factor, arginine/serine-rich 7 (452 aa).

RRM domains follow at residues 10 to 91 (KILH…YPNP) and 163 to 240 (RTVY…HSRV). The interval 258 to 452 (EEAIRMGRNG…GNGDVVMASE (195 aa)) is disordered. Positions 259-272 (EAIRMGRNGDDRDR) are enriched in basic and acidic residues. A compositionally biased stretch (basic residues) spans 273 to 290 (RRSRSPRRRRSPSPRRRR). Over residues 291-305 (DSRDRDRDRDRDRRR) the composition is skewed to basic and acidic residues. 3 stretches are compositionally biased toward basic residues: residues 323–335 (KRSR…RRSR), 345–360 (KRSR…KSRD), and 370–382 (SKDR…RSRS). A compositionally biased stretch (basic and acidic residues) spans 383 to 421 (RSPEKRRDKEDRKTEKKENENESSLREKLLEKKAARKDS).

It belongs to the splicing factor SR family. Post-translationally, extensively phosphorylated on serine residues in the RS domain.

The protein resides in the nucleus. In Caenorhabditis elegans, this protein is Probable splicing factor, arginine/serine-rich 7 (rsp-7).